Consider the following 248-residue polypeptide: MWLGVITLFPEMFRAVTDFGVTGRAVKNGLLELHTWNPRDFTHDRHSTVDDRPYGGGPGMLMMVQPLRDAIHAARAAAGEDAKVIYLSPQGRKLDQQGVTELAKSSRLILVCGRYEGIDERIIQTEVDEEWSVGDYVLSGGELPAMTMIDAVSRLVPGVLGKQASAEQDSFSDGLLDCPHYTRPESLDGLDVPAVLLSGNHEQIRLWRLQQSLGRTLLRRPELLQNLALTDEQSTLLAQFVEAMDKNA.

S-adenosyl-L-methionine contacts are provided by residues G113 and 133-138 (VGDYVL).

This sequence belongs to the RNA methyltransferase TrmD family. As to quaternary structure, homodimer.

It is found in the cytoplasm. The enzyme catalyses guanosine(37) in tRNA + S-adenosyl-L-methionine = N(1)-methylguanosine(37) in tRNA + S-adenosyl-L-homocysteine + H(+). Functionally, specifically methylates guanosine-37 in various tRNAs. This is tRNA (guanine-N(1)-)-methyltransferase from Shewanella oneidensis (strain ATCC 700550 / JCM 31522 / CIP 106686 / LMG 19005 / NCIMB 14063 / MR-1).